The following is a 973-amino-acid chain: Putative helicase 022R (973 aa).

A disordered region spans residues 473–502; that stretch reads AKARGGRDSGNEDDEEDSATDEDDSNPWDS. The span at 483–498 shows a compositional bias: acidic residues; it reads NEDDEEDSATDEDDSN. Residues 658–840 form the SF3 helicase domain; sequence GPVTKLLAFF…FVTPGTTAPA (183 aa). Residue 702–709 coordinates ATP; that stretch reads GTGNNGKT.

This is Putative helicase 022R from Frog virus 3 (isolate Goorha) (FV-3).